A 202-amino-acid polypeptide reads, in one-letter code: MEHYLSLLLKAIFVENMALAFFLGMCTFLAISKKIEAATGLGIAVVVVLTVTVPVNNLLYNTILREGALDWAGLPNVDLSFLGLLTYIGVIAAIVQIMEMVLDKYIPALYAALGVFLPLITVNCAILGASLFMVERDYTFGESLVYGFGAGVGWALAIIALAGIREKLKYSDVPNGLRGLGITFITVGLMSLGFMSFSGISL.

Helical transmembrane passes span 11 to 31, 35 to 55, 81 to 101, 114 to 134, 144 to 164, and 180 to 200; these read AIFV…FLAI, IEAA…TVPV, FLGL…MEMV, GVFL…LFMV, LVYG…LAGI, and LGIT…FSGI.

It belongs to the NqrDE/RnfAE family. As to quaternary structure, composed of six subunits; NqrA, NqrB, NqrC, NqrD, NqrE and NqrF.

The protein localises to the cell inner membrane. The catalysed reaction is a ubiquinone + n Na(+)(in) + NADH + H(+) = a ubiquinol + n Na(+)(out) + NAD(+). Its function is as follows. NQR complex catalyzes the reduction of ubiquinone-1 to ubiquinol by two successive reactions, coupled with the transport of Na(+) ions from the cytoplasm to the periplasm. NqrA to NqrE are probably involved in the second step, the conversion of ubisemiquinone to ubiquinol. This Marinobacter nauticus (strain ATCC 700491 / DSM 11845 / VT8) (Marinobacter aquaeolei) protein is Na(+)-translocating NADH-quinone reductase subunit E.